The following is a 171-amino-acid chain: Myelin basic protein (171 aa).

Alanine 1 bears the N-acetylalanine mark. The span at 1–12 shows a compositional bias: basic residues; that stretch reads ASQKRPSQRHGS. The segment at 1-171 is disordered; the sequence is ASQKRPSQRH…SRSGSPMARR (171 aa). A phosphoserine mark is found at serine 7 and serine 12. Tyrosine 14 carries the post-translational modification Phosphotyrosine. Serine 19 bears the Phosphoserine mark. The residue at position 20 (threonine 20) is a Phosphothreonine. A citrulline mark is found at arginine 25 and arginine 31. Threonine 35 bears the Phosphothreonine mark. Residue serine 39 is modified to Phosphoserine. Omega-N-methylarginine occurs at positions 42 and 48. Residue serine 55 is modified to Phosphoserine. A Phosphothreonine modification is found at threonine 66. Tyrosine 68 is subject to Phosphotyrosine. 2 positions are modified to phosphothreonine: threonine 95 and threonine 98. Position 103 is a deamidated glutamine (glutamine 103). The residue at position 107 (arginine 107) is an Omega-N-methylarginine; alternate. Position 107 is a symmetric dimethylarginine; alternate (arginine 107). Serine 115 carries the phosphoserine modification. Lysine 122 carries the post-translational modification N6-acetyllysine. Citrulline is present on arginine 130. Residue glutamine 148 is modified to Deamidated glutamine. Arginine 160 is subject to Citrulline. Residue serine 162 is modified to Phosphoserine. Residue serine 166 is modified to Phosphoserine; by UHMK1. Arginine 171 is subject to Citrulline.

Belongs to the myelin basic protein family. In terms of assembly, homodimer. In terms of processing, as in other animals, several charge isomers may be produced as a result of optional post-translational modifications, such as phosphorylation of serine or threonine residues, deamidation of glutamine or asparagine residues, citrullination and methylation of arginine residues. Post-translationally, phosphorylated by TAOK2, VRK2, MAPK11, MAPK12, MAPK14 and MINK1. Proteolytically cleaved in B cell lysosomes by cathepsin CTSG which degrades the major immunogenic MBP epitope and prevents the activation of MBP-specific autoreactive T cells.

The protein localises to the myelin membrane. In terms of biological role, is, with PLP, the most abundant protein component of the myelin membrane in the CNS. Has a role in both the formation and stabilization of this compact multilayer arrangement of bilayers. Each splice variant and charge isomer may have a specialized function in the assembly of an optimized, biochemically functional myelin membrane. The protein is Myelin basic protein (MBP) of Sus scrofa (Pig).